A 389-amino-acid polypeptide reads, in one-letter code: Chitinase-3-like protein 1 (389 aa).

The N-terminal stretch at 1–29 is a signal peptide; the sequence is MHTSTEARMGMRAALTGFAVLMLLQSCSA. Positions 30-389 constitute a GH18 domain; it reads YKLVCYFTSW…LTNAIKDALA (360 aa). Cysteine 34 and cysteine 59 form a disulfide bridge. Asparagine 68 is a glycosylation site (N-linked (GlcNAc...) asparagine). Residues 79-80, 106-109, tyrosine 150, and 213-216 contribute to the chitin site; these read EW, GGWK, and MTYD. The cysteines at positions 309 and 372 are disulfide-linked. An important for AKT1 activation and IL8 production region spans residues 333-347; that stretch reads QWVGYEDKESVKNKV. A chitin-binding site is contributed by tryptophan 361.

It belongs to the glycosyl hydrolase 18 family. As to quaternary structure, monomer. In terms of tissue distribution, detected in lung in pulmonary macrophages and alveolar type 2 cells and in bronchoalveolar lavage (BAL) fluids. Expressed in mammary tumor cells (at protein level). Expressed in lung. Not detected in non-inflammatory colon.

It localises to the secreted. The protein localises to the extracellular space. Its subcellular location is the cytoplasm. It is found in the endoplasmic reticulum. In terms of biological role, carbohydrate-binding lectin with a preference for chitin. Has no chitinase activity. May play a role in tissue remodeling and in the capacity of cells to respond to and cope with changes in their environment. Plays a role in T-helper cell type 2 (Th2) inflammatory response and IL-13-induced inflammation, regulating allergen sensitization, inflammatory cell apoptosis, dendritic cell accumulation and M2 macrophage differentiation. Facilitates invasion of pathogenic enteric bacteria into colonic mucosa and lymphoid organs. Mediates activation of AKT1 signaling pathway and subsequent IL8 production in colonic epithelial cells. Regulates antibacterial responses in lung by contributing to macrophage bacterial killing, controlling bacterial dissemination and augmenting host tolerance. Also regulates hyperoxia-induced injury, inflammation and epithelial apoptosis in lung. The chain is Chitinase-3-like protein 1 (Chi3l1) from Mus musculus (Mouse).